Consider the following 558-residue polypeptide: Hsp70-Hsp90 organizing protein 3 (558 aa).

TPR repeat units follow at residues 2–35, 37–69, 70–103, and 136–173; these read AEEA…SPTN, ILYS…KPDW, SKGY…DPSN, and EKLT…YMKD. The STI1 1 domain maps to 131-170; sequence GKEMWEKLTADPGTRVYLEQDDFVKTMKEIQRNPNNLNLY. A disordered region spans residues 191 to 232; the sequence is SSGEDTEMKEADERKEPEPEMEPMELTEEERQKKERKEKALK. The span at 196-208 shows a compositional bias: basic and acidic residues; sequence TEMKEADERKEPE. Residues 209 to 218 are compositionally biased toward acidic residues; it reads PEMEPMELTE. A compositionally biased stretch (basic and acidic residues) spans 219–232; the sequence is EERQKKERKEKALK. Residues 227–244 carry the Bipartite nuclear localization signal motif; that stretch reads KEKALKEKGEGNVAYKKK. 6 TPR repeats span residues 230 to 263, 265 to 297, 305 to 342, 369 to 402, 404 to 436, and 437 to 470; these read ALKE…DDED, SYLT…GREL, ARAL…HRNP, AEEE…NPND, RAYS…DPSF, and TKGY…DPKN. The 40-residue stretch at 507 to 546 folds into the STI1 2 domain; sequence DPEVQNILSDPVMRQVLVDFQENPKAAQEHMKNPMVMNKI.

As to quaternary structure, co-chaperone that forms a complex with HSP70 and HSP90 and preproteins (e.g. chloroplast preproteins). In terms of processing, phosphorylated. Post-translationally, acetylated.

It is found in the cytoplasm. It localises to the nucleus. Mediates the association of the molecular chaperones HSP70 and HSP90. Mediates nuclear encoded chloroplast preproteins binding to HSP90 prior to chloroplastic sorting. Involved in acclimation to heat. The sequence is that of Hsp70-Hsp90 organizing protein 3 (HOP3) from Arabidopsis thaliana (Mouse-ear cress).